Reading from the N-terminus, the 673-residue chain is uncharacterized protein (673 aa).

Residues 1-95 form a disordered region; that stretch reads MLNGEKSALG…QSSAIADSIG (95 aa). The segment covering 13–40 has biased composition (low complexity); the sequence is PSNSNSSSKLNAKSPNFIPSSSNIPRSS. The span at 42 to 60 shows a compositional bias: basic and acidic residues; it reads KTKEHSADRKPHRNSEKKT. An RING-type zinc finger spans residues 214–273; that stretch reads CPFCLEEKPVAARMSRCGHVYCFSCLLRFVETPTAAEVKAAETSGTKIVKCGHRSCPICW. The disordered stretch occupies residues 649 to 673; that stretch reads SAPSKNSKNKKKKKLVLLSTGAAHR.

It is found in the cytoplasm. It localises to the nucleus. This is an uncharacterized protein from Schizosaccharomyces pombe (strain 972 / ATCC 24843) (Fission yeast).